A 318-amino-acid polypeptide reads, in one-letter code: Geranylfarnesyl diphosphate synthase (318 aa).

Isopentenyl diphosphate is bound by residues Lys-31, Arg-34, and His-65. 2 residues coordinate Mg(2+): Asp-72 and Asp-76. Arg-81 lines the an all-trans-polyprenyl diphosphate pocket. Position 82 (Arg-82) interacts with isopentenyl diphosphate. An all-trans-polyprenyl diphosphate-binding residues include Lys-166, Thr-167, and Gln-204.

This sequence belongs to the FPP/GGPP synthase family. In terms of assembly, homodimer. Requires Mg(2+) as cofactor.

The catalysed reaction is isopentenyl diphosphate + (2E,6E,10E)-geranylgeranyl diphosphate = (2E,6E,10E,14E)-geranylfarnesyl diphosphate + diphosphate. In terms of biological role, probably involved in biosynthesis of the precursor for C25 (sesterterpanyl chain) moiety of C25-C25 diether (2,3-di-O-sesterterpanyl-sn-glycero) membrane lipid. Catalyzes the condensation of isopentenyl pyrophosphate with the allylic pyrophosphates to yield all-trans geranylfarnesyl diphosphate (GFPP). Geranylgeranyl diphosphate (GGPP) is the preferred substrate, however methylallyl diphosphate (DMAPP), farnesyl diphosphate (FPP) and geranyl diphosphate (GPP) can also be used as allylic substrate. The polypeptide is Geranylfarnesyl diphosphate synthase (fgs) (Aeropyrum pernix).